The following is a 1353-amino-acid chain: Adenylate cyclase type 9 (1353 aa).

Disordered stretches follow at residues 1 to 27 and 49 to 71; these read MASP…DSNS and SISS…GGGG. Residues 1–117 lie on the Cytoplasmic side of the membrane; it reads MASPPHQQLL…CFPQTQRRFR (117 aa). Positions 16–27 are enriched in polar residues; the sequence is EVSCDSSGDSNS. Over residues 49 to 66 the composition is skewed to low complexity; the sequence is SISSSCSSSGDSGGVPRR. A helical membrane pass occupies residues 118–138; sequence YALFYIGFACLLWSIYFAVHM. Over 139-141 the chain is Extracellular; that stretch reads RSR. Residues 142–162 traverse the membrane as a helical segment; it reads LIVMVAPALCFLLVCVGFFLF. Residues 163–171 are Cytoplasmic-facing; it reads TFTKLYARH. A helical transmembrane segment spans residues 172–192; sequence YAWTSLALTLLVFALTLAAQF. Over 193–215 the chain is Extracellular; that stretch reads QVLTPVSGRGDSSNLTATARPTD. N-linked (GlcNAc...) asparagine glycosylation occurs at Asn206. Residues 216–235 form a helical membrane-spanning segment; it reads TCLSQVGSFSMCIEVLFLLY. At 236–241 the chain is on the cytoplasmic side; sequence TVMHLP. A helical transmembrane segment spans residues 242–259; the sequence is LYLSLCLGVAYSVLFETF. Over 260–280 the chain is Extracellular; it reads GYHFRDEACFPSPGAGALHWE. A helical membrane pass occupies residues 281 to 301; it reads LLSRGLLHGCIHAIGVHLFVM. At 302-786 the chain is on the cytoplasmic side; that stretch reads SQVRSRSTFL…VKTFASPTFS (485 aa). The disordered stretch occupies residues 349–375; the sequence is QGDEESENSVKRHATSSPKNRKKKSSI. Residues 359–374 are compositionally biased toward basic residues; the sequence is KRHATSSPKNRKKKSS. Residues 394-521 form the Guanylate cyclase 1 domain; it reads SILFADIVGF…NDVNLANLME (128 aa). Mg(2+)-binding residues include Asp399, Ile400, and Asp443. ATP is bound by residues 399–404, 441–443, and Arg487; these read DIVGFT and LGD. At Ser610 the chain carries Phosphoserine. A disordered region spans residues 642–684; that stretch reads EAGAEGGAPQNGCQDEHKNSTKASGGPNPKTQNGLLSPPQEEK. Phosphoserine occurs at positions 688, 691, and 706. A helical membrane pass occupies residues 787–807; the sequence is SLLDVFLSTTVFLTLSTTCFL. Residues 808-818 are Extracellular-facing; that stretch reads KYEAATVPPPP. The chain crosses the membrane as a helical span at residues 819 to 839; that stretch reads AALAVFSAALLLEVLSLAVSI. The Cytoplasmic portion of the chain corresponds to 840–867; it reads RMVFFLEDVMACTKRLLEWIAGWLPRHC. Residues 868-888 form a helical membrane-spanning segment; sequence IGAILVSLPALAVYSHVTSEY. Topologically, residues 889–891 are extracellular; that stretch reads ETN. A helical membrane pass occupies residues 892 to 912; it reads IHFPVFTGSAALIAVVHYCNF. Residues 913–920 lie on the Cytoplasmic side of the membrane; sequence CQLSSWMR. A helical membrane pass occupies residues 921–941; it reads SSLATVVGAGPLLLLYVSLCP. The Extracellular segment spans residues 942–975; that stretch reads DSSVLTSPLDAVQNFSSERNPCNSSVPRDLRRPA. Residues Asn955 and Asn964 are each glycosylated (N-linked (GlcNAc...) asparagine). A helical membrane pass occupies residues 976 to 996; it reads SLIGQEVVLVFFLLLLLVWFL. Over 997 to 1353 the chain is Cytoplasmic; it reads NREFEVSYRL…LTKLNVSKSV (357 aa). Positions 1058–1198 constitute a Guanylate cyclase 2 domain; sequence GVIFASIVNF…DTVNIASRMD (141 aa). ATP contacts are provided by residues Lys1108, 1185–1187, 1192–1196, and Lys1232; these read DIW and NIASR. A phosphoserine mark is found at Ser1257, Ser1259, Ser1295, and Ser1307. Over residues 1292-1301 the composition is skewed to polar residues; that stretch reads SLGSDSSTQA. The interval 1292 to 1326 is disordered; it reads SLGSDSSTQAKDAHLSPKRPWKEPVKAEERGRFGK. The span at 1302–1326 shows a compositional bias: basic and acidic residues; it reads KDAHLSPKRPWKEPVKAEERGRFGK.

The protein belongs to the adenylyl cyclase class-4/guanylyl cyclase family. Requires Mg(2+) as cofactor. It depends on Mn(2+) as a cofactor. Detected in skeletal muscle, pancreas, lung, heart, kidney, liver, brain and placenta. Expressed in multiple cells of the lung, with expression highest in airway smooth muscle.

The protein resides in the cell membrane. It catalyses the reaction ATP = 3',5'-cyclic AMP + diphosphate. Its activity is regulated as follows. Insensitive to calcium/calmodulin, forskolin and somatostatin. Stimulated by beta-adrenergic receptor activation. Activity is down-regulated by calcium/calcineurin. Adenylyl cyclase that catalyzes the formation of the signaling molecule cAMP in response to activation of G protein-coupled receptors. Contributes to signaling cascades activated by CRH (corticotropin-releasing factor), corticosteroids and beta-adrenergic receptors. The polypeptide is Adenylate cyclase type 9 (ADCY9) (Homo sapiens (Human)).